Reading from the N-terminus, the 350-residue chain is Probable choline kinase 2 (350 aa).

Residues R73, Q210, and D227 each contribute to the ATP site.

Belongs to the choline/ethanolamine kinase family.

It carries out the reaction choline + ATP = phosphocholine + ADP + H(+). It functions in the pathway phospholipid metabolism; phosphatidylcholine biosynthesis; phosphocholine from choline: step 1/1. Its function is as follows. Involved in phospholipid biosynthesis. Catalyzes the first step in phosphatidylcholine biosynthesis. The sequence is that of Probable choline kinase 2 from Arabidopsis thaliana (Mouse-ear cress).